The chain runs to 580 residues: Putative ankyrin repeat protein L63 (580 aa).

ANK repeat units follow at residues 81–110, 111–140, 141–170, 172–200, 202–230, 314–339, 340–369, 370–399, 400–429, 431–459, 461–489, 490–519, 521–549, and 551–579; these read SLNRHFKMSCEKGQYTIVTYLVALGADFRI, DNDYGLIHAAKNGHIGVVKYLVSKGVNIGA, NDNCAIKFASENGHLEVVEYLVSKGADINA, NNYPIEMASKNGHLKVVEYLVSLGVDIRA, DDYVVGLAYYYDHHEVVDYLVSQGAVLNK, SLDDYLVKSCCEGDLSIIKDLILLGA, SERKAVMLACQNGHLEIIRYFVSQGFNIKC, GSNCAVTIASENGHIEVVRYLISLGADINS, GNNYAIKYASENGHLEVVKYLVDQGANIRA, NDRAVRFASRKGHLEVVKYLVSKGANIRA, DDRAVTLASQNGHLEVVKYLVSQGTDIKA, GDDYAVRWASRNGHLEVVKYLISQGANIKA, DDYAVRWASLNGHLEVVKFLVNQNADIRA, and NNYAVRWAHKNKHFDVVEYLISQGAVINP.

The chain is Putative ankyrin repeat protein L63 from Acanthamoeba polyphaga (Amoeba).